The primary structure comprises 309 residues: MVAVLQSTLPIIFSMEFIMGTLGNGFIFLIVCIDWVQRRKISLVDQIRTALAISRIALIWLIFLDWWVSVHYPALHETGKMLSTYLISWTVINHCNFWLTANLSILYFLKIANFSNIIFLYLKFRSKNVVLVTLLVSLFFLFLNTVIIKIFSDVCFDSVQRNVSQIFIMYNHEQICKFLSFTNPMFTFIPFVMSTVMFSLLIFSLWRHLKNMQHTAKGCRDISTTVHIRALQTIIVSVVLYTIFFLSFFVKVWSFVSPERYLIFLFVWALGNAVFSAHPFVMILVNRRLRLASLSLIFWLWYRFKNIEV.

Over 1-10 (MVAVLQSTLP) the chain is Extracellular. A helical membrane pass occupies residues 11–31 (IIFSMEFIMGTLGNGFIFLIV). Residues 32–55 (CIDWVQRRKISLVDQIRTALAISR) are Cytoplasmic-facing. A helical transmembrane segment spans residues 56–76 (IALIWLIFLDWWVSVHYPALH). Residues 77–80 (ETGK) lie on the Extracellular side of the membrane. Residues 81–101 (MLSTYLISWTVINHCNFWLTA) form a helical membrane-spanning segment. At 102–127 (NLSILYFLKIANFSNIIFLYLKFRSK) the chain is on the cytoplasmic side. The helical transmembrane segment at 128-148 (NVVLVTLLVSLFFLFLNTVII) threads the bilayer. Residues 149-185 (KIFSDVCFDSVQRNVSQIFIMYNHEQICKFLSFTNPM) lie on the Extracellular side of the membrane. N162 is a glycosylation site (N-linked (GlcNAc...) asparagine). A helical membrane pass occupies residues 186-206 (FTFIPFVMSTVMFSLLIFSLW). Residues 207 to 229 (RHLKNMQHTAKGCRDISTTVHIR) lie on the Cytoplasmic side of the membrane. A helical membrane pass occupies residues 230 to 250 (ALQTIIVSVVLYTIFFLSFFV). Residues 251–262 (KVWSFVSPERYL) lie on the Extracellular side of the membrane. A helical transmembrane segment spans residues 263–283 (IFLFVWALGNAVFSAHPFVMI). At 284–309 (LVNRRLRLASLSLIFWLWYRFKNIEV) the chain is on the cytoplasmic side.

The protein belongs to the G-protein coupled receptor T2R family.

It localises to the membrane. Its function is as follows. Putative taste receptor which may play a role in the perception of bitterness. This chain is Taste receptor type 2 member 113, found in Mus musculus (Mouse).